Here is a 500-residue protein sequence, read N- to C-terminus: Probable E3 ubiquitin-protein ligase ARI16 (500 aa).

The tract at residues N74–A288 is TRIAD supradomain. An RING-type 1 zinc finger spans residues S78–C130. C96, H98, C125, C130, C169, C174, C194, C196, C201, C204, H209, C214, C241, C244, C261, C263, C268, C271, H278, and C284 together coordinate Zn(2+). The IBR-type zinc finger occupies E148–C214. The segment at C241–C271 adopts an RING-type 2; atypical zinc-finger fold. The RanBP2-type zinc finger occupies E453 to Y483.

The protein belongs to the RBR family. Ariadne subfamily. Requires Zn(2+) as cofactor. As to expression, preferentially expressed in green siliques.

It carries out the reaction [E2 ubiquitin-conjugating enzyme]-S-ubiquitinyl-L-cysteine + [acceptor protein]-L-lysine = [E2 ubiquitin-conjugating enzyme]-L-cysteine + [acceptor protein]-N(6)-ubiquitinyl-L-lysine.. It participates in protein modification; protein ubiquitination. Its function is as follows. Might act as an E3 ubiquitin-protein ligase, or as part of E3 complex, which accepts ubiquitin from specific E2 ubiquitin-conjugating enzymes and then transfers it to substrates. The protein is Probable E3 ubiquitin-protein ligase ARI16 (ARI16) of Arabidopsis thaliana (Mouse-ear cress).